Here is a 578-residue protein sequence, read N- to C-terminus: Glycosyltransferase family 92 protein RCOM_0530710 (578 aa).

A helical transmembrane segment spans residues 21–43 (SFFSVRSLTACLSFFVFLLFISS). The region spanning 295–531 (YELCACTMLW…QNQGSKDRAP (237 aa)) is the GT92 domain.

The protein belongs to the glycosyltransferase 92 family.

The protein localises to the membrane. This Ricinus communis (Castor bean) protein is Glycosyltransferase family 92 protein RCOM_0530710.